The sequence spans 726 residues: BRCA1-A complex subunit RAP80 (726 aa).

A disordered region spans residues 1-27; that stretch reads MPRRKKKIKEASEGQNLEKKDLETTSS. The tract at residues 1–101 is necessary for transcriptional repression; the sequence is MPRRKKKIKE…SEQEAKEVNN (101 aa). Over residues 9-23 the composition is skewed to basic and acidic residues; it reads KEASEGQNLEKKDLE. A Glycyl lysine isopeptide (Lys-Gly) (interchain with G-Cter in SUMO2) cross-link involves residue lysine 20. Serine 29 bears the Phosphoserine mark. Lysine 31 participates in a covalent cross-link: Glycyl lysine isopeptide (Lys-Gly) (interchain with G-Cter in SUMO2). 2 positions are modified to phosphoserine: serine 44 and serine 46. Residues 47-67 form a disordered region; it reads DGEETKEENGLQKMKTKQSNR. Threonine 51 carries the phosphothreonine modification. An LR motif motif is present at residues 60 to 78; the sequence is MKTKQSNRSKCLAKRKIAQ. Residues lysine 75 and lysine 90 each participate in a glycyl lysine isopeptide (Lys-Gly) (interchain with G-Cter in SUMO2) cross-link. UIM domains are found at residues 80-99 and 104-124; these read SEEE…AKEV and EKEE…RWSS. Disordered regions lie at residues 93–112 and 119–208; these read EQEA…LLRK and NSRW…SRPV. Positions 97 to 103 are UIM-linker; the sequence is KEVNNQE. Positions 100-200 are necessary for interaction with NR6A1 N-terminus; it reads NNQEEKEEEL…EEPLSGSSGS (101 aa). Position 140 is a phosphoserine (serine 140). Residues 177–188 show a composition bias toward basic and acidic residues; sequence EEGKEPWDHSEN. A compositionally biased stretch (low complexity) spans 194–205; sequence LSGSSGSQDQSS. Serine 205 is subject to Phosphoserine. Residue lysine 245 forms a Glycyl lysine isopeptide (Lys-Gly) (interchain with G-Cter in SUMO2) linkage. The segment at 270-400 is AIR; that stretch reads IGGTVHYYWG…EEEPTTGRGQ (131 aa). The tract at residues 356 to 411 is disordered; sequence GAREERQGSGASVWHSETKDSQKSPITSLKQRLLLEEEPTTGRGQSSQGLFVEETS. A phosphoserine mark is found at serine 379, serine 402, and serine 427. The interval 400–507 is necessary for interaction with NR6A1 C-terminus; that stretch reads QSSQGLFVEE…DSRPPAVSAS (108 aa). Lysine 436 is covalently cross-linked (Glycyl lysine isopeptide (Lys-Gly) (interchain with G-Cter in SUMO2)). The segment at 509–536 adopts a UBZ4-type zinc-finger fold; that stretch reads RVSCPLCNQDFPPTKIEQHAMYCTGLME. Zn(2+) is bound by residues cysteine 512, cysteine 515, histidine 527, and cysteine 531. A zinc-finger-like region region spans residues 512–589; sequence CPLCNQDFPP…GEYQCHVETC (78 aa). Residues lysine 551, lysine 569, and lysine 616 each participate in a glycyl lysine isopeptide (Lys-Gly) (interchain with G-Cter in SUMO2) cross-link. A disordered region spans residues 611-675; the sequence is APVEGKPKQR…DVEEAGCSRE (65 aa). Serine 636 is subject to Phosphoserine. Over residues 640 to 653 the composition is skewed to basic and acidic residues; the sequence is QSEHRTTGVERTPK. A phosphoserine mark is found at serine 664 and serine 688. A Glycyl lysine isopeptide (Lys-Gly) (interchain with G-Cter in SUMO2) cross-link involves residue lysine 707.

It belongs to the RAP80 family. Component of the ARISC complex, at least composed of UIMC1/RAP80, ABRAXAS1, BRCC3/BRCC36, BABAM2 and BABAM1/NBA1. Component of the BRCA1-A complex, at least composed of the BRCA1, BARD1, UIMC1/RAP80, ABRAXAS1, BRCC3/BRCC36, BABAM2 and BABAM1/NBA1. In the BRCA1-A complex, interacts directly with ABRAXAS1. Interacts with UBE2I. Interacts with NR6A1. Interacts with ESR1. Interacts with TSP57. Interacts with TRAIP. Sumoylated. In terms of processing, phosphorylated upon DNA damage by ATM or ATR.

The protein resides in the nucleus. Its function is as follows. Ubiquitin-binding protein. Specifically recognizes and binds 'Lys-63'-linked ubiquitin. Plays a central role in the BRCA1-A complex by specifically binding 'Lys-63'-linked ubiquitinated histones H2A and H2AX at DNA lesions sites, leading to target the BRCA1-BARD1 heterodimer to sites of DNA damage at double-strand breaks (DSBs). The BRCA1-A complex also possesses deubiquitinase activity that specifically removes 'Lys-63'-linked ubiquitin on histones H2A and H2AX. Also weakly binds monoubiquitin but with much less affinity than 'Lys-63'-linked ubiquitin. May interact with monoubiquitinated histones H2A and H2B; the relevance of such results is however unclear in vivo. Does not bind Lys-48'-linked ubiquitin. May indirectly act as a transcriptional repressor by inhibiting the interaction of NR6A1 with the corepressor NCOR1. The sequence is that of BRCA1-A complex subunit RAP80 (Uimc1) from Rattus norvegicus (Rat).